A 435-amino-acid polypeptide reads, in one-letter code: MAAHLLPICALFLTLLDMAQGFRGPLLPNRPFTTVWNANTQWCLERHGVDVDVSVFDVVANPGQTFRGPDMTIFYSSQLGTYPYYTPTGEPVFGGLPQNASLIAHLARTFQDILAAIPAPDFSGLAVIDWEAWRPRWAFNWDTKDIYRQRSRALVQAQHPDWPAPQVEAVAQDQFQGAARAWMAGTLQLGRALRPRGLWGFYGFPDCYNYDFLSPNYTGQCPSGIRAQNDQLGWLWGQSRALYPSIYMPAVLEGTGKSQMYVQHRVAEAFRVAVAAGDPNLPVLPYVQIFYDTTNHFLPLDELEHSLGESAAQGAAGVVLWVSWENTRTKESCQAIKEYMDTTLGPFILNVTSGALLCSQALCSGHGRCVRRTSHPKALLLLNPASFSIQLTPGGGPLSLRGALSLEDQAQMAVEFKCRCYPGWQAPWCERKSMW.

The first 21 residues, 1–21 (MAAHLLPICALFLTLLDMAQG), serve as a signal peptide directing secretion. Disulfide bonds link C43/C333 and C207/C221. An N-linked (GlcNAc...) asparagine glycan is attached at N99. The active-site Proton donor is E131. Residues N216 and N350 are each glycosylated (N-linked (GlcNAc...) asparagine). The EGF-like domain maps to 354–430 (GALLCSQALC…YPGWQAPWCE (77 aa)). 3 cysteine pairs are disulfide-bonded: C358/C369, C363/C418, and C420/C429.

This sequence belongs to the glycosyl hydrolase 56 family. As to expression, highly expressed in the liver, kidney and heart. Weakly expressed in lung, placenta and skeletal muscle. No expression detected in adult brain. Isoform 1 is expressed only in bladder and prostate cancer cells, G2/G3 bladder tumor tissues and lymph node specimens showing tumor invasive tumors cells. Isoform 3, isoform 4, isoform 5 and isoform 6 are expressed in normal bladder and bladder tumor tissues.

The protein localises to the secreted. It localises to the lysosome. The catalysed reaction is Random hydrolysis of (1-&gt;4)-linkages between N-acetyl-beta-D-glucosamine and D-glucuronate residues in hyaluronate.. Functionally, may have a role in promoting tumor progression. May block the TGFB1-enhanced cell growth. This chain is Hyaluronidase-1 (HYAL1), found in Homo sapiens (Human).